We begin with the raw amino-acid sequence, 299 residues long: B3 domain-containing transcription factor NGA2 (299 aa).

The disordered stretch occupies residues 1-21 (MNQEDKEKPIEEASSSMEREH). A DNA-binding region (TF-B3) is located at residues 23–129 (FDKVVTPSDV…KLYIDWRRRP (107 aa)). Residues 226–249 (GGGGSVNSTEEESSSSGGSIPRGR) form a disordered region.

The protein resides in the nucleus. Regulates lateral organ growth. Functionally redundant with NGA1, NGA3 and NGA4. This Arabidopsis thaliana (Mouse-ear cress) protein is B3 domain-containing transcription factor NGA2 (NGA2).